A 241-amino-acid chain; its full sequence is Adapter protein MecA (241 aa).

A disordered region spans residues 115-141 (TDSNDKNNDDSSYMSDGNPADLNGYAN).

Belongs to the MecA family. In terms of assembly, homodimer.

In terms of biological role, enables the recognition and targeting of unfolded and aggregated proteins to the ClpC protease or to other proteins involved in proteolysis. The polypeptide is Adapter protein MecA (Pediococcus pentosaceus (strain ATCC 25745 / CCUG 21536 / LMG 10740 / 183-1w)).